The following is a 592-amino-acid chain: Inactive heparanase-2 (592 aa).

Positions 1-41 (MRVLCAFPEAMPSSNSRPPACLAPGALYLALLLHLSLSSQA) are cleaved as a signal peptide. N-linked (GlcNAc...) asparagine glycosylation is found at Asn-254 and Asn-392.

It belongs to the glycosyl hydrolase 79 family. In terms of assembly, interacts with HPSE. Interacts with SDC1 (via glycan chains). In terms of tissue distribution, widely expressed, with the highest expression in brain, mammary gland, prostate, small intestine, testis and uterus. In the central nervous system, expressed in the spinal cord, caudate nucleus, thalamus, substantia nigra, medulla oblongata, putamen and pons. In the urinary bladder, expressed in longitudinal and circular layers of detrusor muscle. Found both in normal and cancer tissues.

It localises to the secreted. The protein resides in the extracellular space. Its subcellular location is the extracellular matrix. Functionally, binds heparin and heparan sulfate with high affinity, but lacks heparanase activity. Inhibits HPSE, possibly by competing for its substrates (in vitro). This Homo sapiens (Human) protein is Inactive heparanase-2 (HPSE2).